The chain runs to 158 residues: NADH-quinone oxidoreductase subunit B (158 aa).

[4Fe-4S] cluster-binding residues include Cys-36, Cys-37, Cys-101, and Cys-131.

It belongs to the complex I 20 kDa subunit family. As to quaternary structure, NDH-1 is composed of 14 different subunits. Subunits NuoB, C, D, E, F, and G constitute the peripheral sector of the complex. [4Fe-4S] cluster is required as a cofactor.

Its subcellular location is the cell inner membrane. The enzyme catalyses a quinone + NADH + 5 H(+)(in) = a quinol + NAD(+) + 4 H(+)(out). NDH-1 shuttles electrons from NADH, via FMN and iron-sulfur (Fe-S) centers, to quinones in the respiratory chain. The immediate electron acceptor for the enzyme in this species is believed to be ubiquinone. Couples the redox reaction to proton translocation (for every two electrons transferred, four hydrogen ions are translocated across the cytoplasmic membrane), and thus conserves the redox energy in a proton gradient. This chain is NADH-quinone oxidoreductase subunit B, found in Francisella tularensis subsp. tularensis (strain FSC 198).